Here is a 240-residue protein sequence, read N- to C-terminus: Nuclear receptor-interacting protein 3 (240 aa).

This chain is Nuclear receptor-interacting protein 3 (NRIP3), found in Pongo abelii (Sumatran orangutan).